The sequence spans 351 residues: SKP1-like protein 21 (351 aa).

The interval 108 to 167 (TSAADSLQLKPLVDLTSRALARIIEGKTPEEIREIFHLPDDLTEEEKLEPLKNTMDDPRI) is interaction with the F-box domain of F-box proteins. Disordered stretches follow at residues 216–240 (VKTSKSKKKNKKRKEQKNGSSNGTC) and 330–351 (VNFSINGNGTSRRLTGPAAGHK). Basic residues predominate over residues 217-230 (KTSKSKKKNKKRKE). A compositionally biased stretch (polar residues) spans 330–342 (VNFSINGNGTSRR).

The protein belongs to the SKP1 family. Part of a SCF (SKP1-cullin-F-box) protein ligase complex. In terms of tissue distribution, expressed in young seedlings, roots, leaves, floral stems, inflorescences, and siliques.

Its subcellular location is the nucleus. The protein operates within protein modification; protein ubiquitination. Involved in ubiquitination and subsequent proteasomal degradation of target proteins. Together with CUL1, RBX1 and a F-box protein, it forms a SCF E3 ubiquitin ligase complex. The functional specificity of this complex depends on the type of F-box protein. In the SCF complex, it serves as an adapter that links the F-box protein to CUL1. This is SKP1-like protein 21 (ASK21) from Arabidopsis thaliana (Mouse-ear cress).